We begin with the raw amino-acid sequence, 229 residues long: HTH-type transcriptional regulator HbdR (229 aa).

The region spanning 20 to 80 (EERRHQIISA…LTLKNVLDTY (61 aa)) is the HTH tetR-type domain. The H-T-H motif DNA-binding region spans 43–62 (TILQIAREAKVSTGLIYQYF).

Homodimer in solution.

With respect to regulation, activity is regulated by the effector molecules 3-hydroxybenzoyl-CoA and benzoyl-CoA, which bind to HbdR, alleviating its repression on the three target promoters and inducing the expression of the hbd genes. Transcriptional regulator that controls the expression of the hbd cluster, which contains three catabolic operons and is responsible for the anaerobic degradation of 3-hydroxybenzoate. HbdR suppresses the activity of the three catabolic promoters (PhbdN, PhbdE and PhbdH) by binding to a conserved palindromic operator box. In addition, it slightly increases activity of its own promoter (PhbdR). The HbdR-mediated repression of hbd genes may play a crucial biological role in maintaining requisite hydroxybenzoate levels in the cell. The polypeptide is HTH-type transcriptional regulator HbdR (Aromatoleum sp. (strain CIB) (Azoarcus sp. (strain CIB))).